The sequence spans 308 residues: Vacuolar lysine transporter YPQ1 (308 aa).

The Vacuolar portion of the chain corresponds to 1–12 (MQLVPLELNRST). N-linked (GlcNAc...) asparagine glycosylation is present at asparagine 9. Residues 10-76 (RSTLSGISGS…QHLLSTMIIL (67 aa)) form the PQ-loop 1 domain. A helical membrane pass occupies residues 13 to 33 (LSGISGSISISCWIIVFVPQI). The Cytoplasmic segment spans residues 34–44 (YENFYRKSSDG). Residues 45-65 (LSLLFVVLWLAGDVFNLMGAV) traverse the membrane as a helical segment. Over 66-68 (MQH) the chain is Vacuolar. Residues 69-89 (LLSTMIILAAYYTVADIILLG) form a helical membrane-spanning segment. Topologically, residues 90–167 (QCLWYDNEEK…EVNSRNLIKD (78 aa)) are cytoplasmic. A helical transmembrane segment spans residues 168–188 (IFIVSGVVFVGFISWYVTYCV). Asparagine 189 is a glycosylation site (N-linked (GlcNAc...) asparagine). Over 189–205 (NYTQPPPVEDPSLPVPE) the chain is Vacuolar. The helical transmembrane segment at 206-226 (LQINWMAQIFGYLSALLYLGS) threads the bilayer. The PQ-loop 2 domain occupies 211–274 (MAQIFGYLSA…ISLDWKYLIM (64 aa)). The Cytoplasmic segment spans residues 227-244 (RIPQILLNFKRKSCEGIS). A helical transmembrane segment spans residues 245–265 (FLFFLFACLGNTTFIFSVIVI). Topologically, residues 266-277 (SLDWKYLIMNAS) are vacuolar. Residue asparagine 275 is glycosylated (N-linked (GlcNAc...) asparagine). A helical transmembrane segment spans residues 278 to 298 (WLVGSIGTLFMDFVIFSQFFI). At 299-308 (YKRNKKFILN) the chain is on the cytoplasmic side.

The protein belongs to the laat-1 family.

It localises to the vacuole membrane. Functionally, amino acid transporter that moves lysine into the vacuole. May also contribute to low affinity arginine import into the vacuole. Has also been suggested to mediate export of cationic amino acids from the vacuole. May function as an amino acid/proton antiporter. The polypeptide is Vacuolar lysine transporter YPQ1 (YPQ1) (Saccharomyces cerevisiae (strain ATCC 204508 / S288c) (Baker's yeast)).